A 1000-amino-acid chain; its full sequence is C-module-binding factor A (1000 aa).

The JmjC domain maps to 113–280; that stretch reads PREWQEYLSH…ISYFSSLPHT (168 aa). The PHD-type; atypical zinc finger occupies 489-544; sequence KIKCHRCEKRFKKFSIIFCTNCNARFCEQCVVNTFGQNFQVLMKRNEWECFCCKGL. Residues 492-542 form an RING-type; degenerate zinc finger; the sequence is CHRCEKRFKKFSIIFCTNCNARFCEQCVVNTFGQNFQVLMKRNEWECFCCK. Disordered regions lie at residues 561 to 647 and 660 to 818; these read RILN…SSYS and SYGS…KNLK. Low complexity-rich tracts occupy residues 574 to 647, 660 to 683, 700 to 710, 732 to 751, and 760 to 789; these read NNNN…SSYS, SYGS…NNNN, SSSSGSGSSNS, NNNN…NNHH, and NNNN…STST. A compositionally biased stretch (basic and acidic residues) spans 805-818; that stretch reads DNDKPKGRPPKNLK. The segment at residues 810 to 818 is a DNA-binding region (a.T hook); sequence KGRPPKNLK.

Monomer.

The protein localises to the nucleus. Functionally, transcriptional regulator involved in phagocytosis and pinocytosis. Both activates and represses transcription. Regulates expression of acaA, carA, pkaC, csaA, cotB and lagC. Promotes amplification of the tRNA gene-associated retrotransposon TRE5-A, a mobile genetic element formerly called as Dictyostelium repetitive element (DRE). Suppresses agnC and agnE encoding argonaute proteins which are part of a RNA interference pathway controlling TRE5-A amplification. Required for amplification of both sense and antisense RNA transcripts, but does not activate their promoters found in A-module and C-module of the TRE5-A, respectively. Nevertheless, binds to distinct DNA sequences containing A and T stretches within the C-module in vitro. This Dictyostelium discoideum (Social amoeba) protein is C-module-binding factor A.